The chain runs to 565 residues: Oxygen-dependent choline dehydrogenase (565 aa).

6–35 contributes to the FAD binding site; it reads DYIIVGAGSAGNTLATRLTEDAGVTVLLLE. Residue His-475 is the Proton acceptor of the active site.

It belongs to the GMC oxidoreductase family. The cofactor is FAD.

It catalyses the reaction choline + A = betaine aldehyde + AH2. The catalysed reaction is betaine aldehyde + NAD(+) + H2O = glycine betaine + NADH + 2 H(+). Its pathway is amine and polyamine biosynthesis; betaine biosynthesis via choline pathway; betaine aldehyde from choline (cytochrome c reductase route): step 1/1. Functionally, involved in the biosynthesis of the osmoprotectant glycine betaine. Catalyzes the oxidation of choline to betaine aldehyde and betaine aldehyde to glycine betaine at the same rate. This chain is Oxygen-dependent choline dehydrogenase, found in Pseudomonas putida (strain ATCC 700007 / DSM 6899 / JCM 31910 / BCRC 17059 / LMG 24140 / F1).